A 117-amino-acid polypeptide reads, in one-letter code: Antimicrobial peptide AmAMP1 (117 aa).

An N-terminal signal peptide occupies residues 1 to 25; sequence MPSIRVLFVLLAVILLFMEVKMTSA. Positions 26 to 73 are excised as a propeptide; sequence ASIVKDVDEDETLENEDGEAMENSWPWHGVEDTSDYSDLSDLANSEKR. Intrachain disulfides connect cysteine 76/cysteine 115, cysteine 85/cysteine 108, and cysteine 94/cysteine 112.

The protein belongs to the coral AMP family.

Its subcellular location is the secreted. Functionally, coral peptide that probably acts as an antimicrobial peptide in the surface mucous layer of planula larvae and likely also in adults. Shows moderate to high activity against some Gram-negative and Gram-positive bacteria (tested on E.coli, B.megaterium, S.aureus, E.aesturaii, B.algicola, Acinetobacter spec.). Does not show antibacterial activity against the coral pathogen V.coralliilyticus. This chain is Antimicrobial peptide AmAMP1, found in Acropora millepora (Staghorn coral).